We begin with the raw amino-acid sequence, 784 residues long: MPNIEKYEIFLDFNGNEYEGVEKIYLNSEEEKLELDSVNLEIRSVKSDGKDTKFELKGEKLVIYGKIERELEIKFKGKASRDSILGIYVAPYDGKGMITTQFEAVYARRFIPCFDHPAMKARFKLSVRVQKGLKVISNMPVERIEEDVDGKVIYRFQETPKMSTYLLYLGIDEFEEISDNSKQPTVILATVPGKSKRGLFAINVARKVIEFYEKYFEIPYQLPKVHLIQVPEFAAGAMENWGAITFRETALLADDSSSISQKFRVAEVVAHELAHQWFGNLVTLKWWDDLWLNESFATFMSYKSIKHLFPQWDSEGHLIYDESIGALEDDSLSTTHPIEAHVKDPHEIEQMFDNISYGKGASILKMIEAYVGEENFRRGVVNYLNSFKFGNAEGKDLWNSISNAAGQSIGEIMADWITKPGYPVIFVNAYGNSIRFSQKRFTLLDSGLNEVYKVPITYEINDKFGTLLLDKESAEIRLDEGLKSIKVNINRTGFYRVLYDSLNLAFSSKLNAYEELGLVNDYWNFLLADLIDAKTYFGVIGRFVYTSNSFVSREITSQLLTLYYLFKKNYGKDFLVNQVKIFRKANDDLGKLAYSTVISALARMDEEFALGLSTLFDQYENIDSNIKEAVAIAYAVTNNDFNTLLEKYKRYTIDEEKNRILSAISSLRDPSIVVKVFSLIFERNIKAQDTRFVISSLLHNPHIREEVCSYLMNNFEEVKKFVNTVYGGPWGLGSIVRSMSFCGVDKPKDIIDFLEKVKFKEIERPIKESEERIKVYSRLKQNLP.

Substrate is bound by residues glutamate 103 and 236–240 (GAMEN). Histidine 271 lines the Zn(2+) pocket. Glutamate 272 functions as the Proton acceptor in the catalytic mechanism. Residues histidine 275 and glutamate 294 each contribute to the Zn(2+) site.

The protein belongs to the peptidase M1 family. The cofactor is Zn(2+).

The protein resides in the cytoplasm. The sequence is that of Probable aminopeptidase 1 (ape1) from Saccharolobus solfataricus (strain ATCC 35092 / DSM 1617 / JCM 11322 / P2) (Sulfolobus solfataricus).